The chain runs to 486 residues: Malonate-semialdehyde dehydrogenase (486 aa).

Phenylalanine 154, lysine 178, glutamate 181, arginine 182, and serine 231 together coordinate NAD(+). Cysteine 286 (nucleophile) is an active-site residue. Glutamate 386 contributes to the NAD(+) binding site.

The protein belongs to the aldehyde dehydrogenase family. IolA subfamily. In terms of assembly, homotetramer.

It carries out the reaction 3-oxopropanoate + NAD(+) + CoA + H2O = hydrogencarbonate + acetyl-CoA + NADH + H(+). The enzyme catalyses 2-methyl-3-oxopropanoate + NAD(+) + CoA + H2O = propanoyl-CoA + hydrogencarbonate + NADH + H(+). It functions in the pathway polyol metabolism; myo-inositol degradation into acetyl-CoA; acetyl-CoA from myo-inositol: step 7/7. Functionally, catalyzes the oxidation of malonate semialdehyde (MSA) and methylmalonate semialdehyde (MMSA) into acetyl-CoA and propanoyl-CoA, respectively. Is involved in a myo-inositol catabolic pathway. Bicarbonate, and not CO2, is the end-product of the enzymatic reaction. The polypeptide is Malonate-semialdehyde dehydrogenase (Bacillus cereus (strain B4264)).